We begin with the raw amino-acid sequence, 681 residues long: Auxin response factor 8 (681 aa).

A DNA-binding region (TF-B3) is located at residues 120-222; sequence FAKTLTQSDA…DLHVGIRRAK (103 aa). Disordered stretches follow at residues 474-518 and 534-577; these read LRRP…AKPP and SLSG…TSSE. Composition is skewed to polar residues over residues 534 to 555 and 564 to 577; these read SLSGTTSPAATGNSSLNWNTEK and GVIQNSPTDNTSSE. One can recognise a PB1 domain in the interval 595–675; that stretch reads PGQCKVFIES…RRLTILTDAG (81 aa).

It belongs to the ARF family. As to quaternary structure, homodimers and heterodimers. In terms of tissue distribution, expressed in roots, culms, leaves and young panicles.

The protein resides in the nucleus. Functionally, auxin response factors (ARFs) are transcriptional factors that bind specifically to the DNA sequence 5'-TGTCTC-3' found in the auxin-responsive promoter elements (AuxREs). This Oryza sativa subsp. japonica (Rice) protein is Auxin response factor 8 (ARF8).